A 611-amino-acid chain; its full sequence is MFVKQYDVIVVGGGHSGSEAALAASNLGSNTLLITTNLYNIGQMSCNPAMGGIAKGQMIKEIDALGGYSGIITDKSMIQFRMLNKSKGPAMWSPRAQCDRLKFSKEWRLTLEKKKNLSFFQSTVVDLIIKNYKVIGVKTILGIYIKSKSVILTNGTFLNGIIHIGDKKNSGGRISENSVKGLTEKLKKIGFFSGRMKTGTSPRLDGRSLDFSKMIEQLGDFPIEPFSYLSNLNILKQKKCYITHTNLETHNLLSKEFNRSPIFNGKIKCVGPRYCPSIEEKVYRFSNKENHQIFVEPEGVNTIEVYINGFSTSMPEEVQYKALLTIPGFEHAKMVRPGYAIEYDYFPPTQLKNNLETKLIENLFFAGQINGTTGYEEAAAQGLIAGINANLKINEKDPFILKRNEAYIGVLIDDLIYKGTEEPYRMFTSRAEYRILLRQDNADERLTHMGINLGLVSYDRIKKLKNKNKNKKQCFLFFKINKANNLILKENIKICDLLSRPEISIYDIIKLSLIKNFIKKNNIDKKILEQISLYIKYKGYLLKEEENVKKMYRLETIRIPNDFDYNQVKSISIEAREKLLNYKPNSIGEASRISGVSPSDIRILILFLIKK.

12–17 (GGGHSG) is an FAD binding site. 271–285 (GPRYCPSIEEKVYRF) is a binding site for NAD(+).

The protein belongs to the MnmG family. In terms of assembly, homodimer. Heterotetramer of two MnmE and two MnmG subunits. The cofactor is FAD.

It is found in the cytoplasm. In terms of biological role, NAD-binding protein involved in the addition of a carboxymethylaminomethyl (cmnm) group at the wobble position (U34) of certain tRNAs, forming tRNA-cmnm(5)s(2)U34. The chain is tRNA uridine 5-carboxymethylaminomethyl modification enzyme MnmG from Karelsulcia muelleri (strain GWSS) (Sulcia muelleri).